The primary structure comprises 342 residues: tRNA N6-adenosine threonylcarbamoyltransferase (342 aa).

The Fe cation site is built by His114 and His118. Substrate is bound by residues 136–140 (LVSGG), Asp169, Gly182, Asp186, and Asn275. Residue Asp301 participates in Fe cation binding.

It belongs to the KAE1 / TsaD family. Requires Fe(2+) as cofactor.

The protein localises to the cytoplasm. The catalysed reaction is L-threonylcarbamoyladenylate + adenosine(37) in tRNA = N(6)-L-threonylcarbamoyladenosine(37) in tRNA + AMP + H(+). In terms of biological role, required for the formation of a threonylcarbamoyl group on adenosine at position 37 (t(6)A37) in tRNAs that read codons beginning with adenine. Is involved in the transfer of the threonylcarbamoyl moiety of threonylcarbamoyl-AMP (TC-AMP) to the N6 group of A37, together with TsaE and TsaB. TsaD likely plays a direct catalytic role in this reaction. The protein is tRNA N6-adenosine threonylcarbamoyltransferase of Streptococcus pyogenes serotype M2 (strain MGAS10270).